A 337-amino-acid chain; its full sequence is Probable dual-specificity RNA methyltransferase RlmN (337 aa).

The active-site Proton acceptor is the glutamate 88. Positions 94-324 (SEKRLTVCVS…VRYSRGLATD (231 aa)) constitute a Radical SAM core domain. An intrachain disulfide couples cysteine 101 to cysteine 327. [4Fe-4S] cluster contacts are provided by cysteine 108, cysteine 112, and cysteine 115. S-adenosyl-L-methionine is bound by residues 155 to 156 (GE), serine 185, 208 to 210 (SLH), and asparagine 284. The active-site S-methylcysteine intermediate is the cysteine 327.

Belongs to the radical SAM superfamily. RlmN family. It depends on [4Fe-4S] cluster as a cofactor.

The protein localises to the cytoplasm. It catalyses the reaction adenosine(2503) in 23S rRNA + 2 reduced [2Fe-2S]-[ferredoxin] + 2 S-adenosyl-L-methionine = 2-methyladenosine(2503) in 23S rRNA + 5'-deoxyadenosine + L-methionine + 2 oxidized [2Fe-2S]-[ferredoxin] + S-adenosyl-L-homocysteine. It carries out the reaction adenosine(37) in tRNA + 2 reduced [2Fe-2S]-[ferredoxin] + 2 S-adenosyl-L-methionine = 2-methyladenosine(37) in tRNA + 5'-deoxyadenosine + L-methionine + 2 oxidized [2Fe-2S]-[ferredoxin] + S-adenosyl-L-homocysteine. Specifically methylates position 2 of adenine 2503 in 23S rRNA and position 2 of adenine 37 in tRNAs. The sequence is that of Probable dual-specificity RNA methyltransferase RlmN from Microcystis aeruginosa (strain NIES-843 / IAM M-2473).